We begin with the raw amino-acid sequence, 811 residues long: Elongation factor G, mitochondrial (811 aa).

The transit peptide at 1 to 64 (MSAIARAAAR…FQQSFQRRWA (64 aa)) directs the protein to the mitochondrion. Residues 96–394 (RRQRNVGISA…GVCAYLPNPS (299 aa)) enclose the tr-type G domain. GTP is bound by residues 105–112 (AHIDSGKT), 192–196 (DTPGH), and 246–249 (NKMD).

Belongs to the TRAFAC class translation factor GTPase superfamily. Classic translation factor GTPase family. EF-G/EF-2 subfamily.

It localises to the mitochondrion. It participates in protein biosynthesis; polypeptide chain elongation. In terms of biological role, mitochondrial GTPase that catalyzes the GTP-dependent ribosomal translocation step during translation elongation. During this step, the ribosome changes from the pre-translocational (PRE) to the post-translocational (POST) state as the newly formed A-site-bound peptidyl-tRNA and P-site-bound deacylated tRNA move to the P and E sites, respectively. Catalyzes the coordinated movement of the two tRNA molecules, the mRNA and conformational changes in the ribosome. The chain is Elongation factor G, mitochondrial from Cryptococcus neoformans var. neoformans serotype D (strain B-3501A) (Filobasidiella neoformans).